The sequence spans 345 residues: Dimethyladenosine transferase 1, mitochondrial (345 aa).

The N-terminal 27 residues, 1–27 (MAAPGKLSTCRLPPLPTIREIIKLFRL), are a transit peptide targeting the mitochondrion. The S-adenosyl-L-methionine site is built by leucine 38, glycine 63, glutamate 85, lysine 86, aspartate 111, valine 112, and asparagine 141.

This sequence belongs to the class I-like SAM-binding methyltransferase superfamily. rRNA adenine N(6)-methyltransferase family. KsgA subfamily. Interacts with mitochondrial RNA polymerase POLRMT. Interacts with TFAM. Bound to the maturing mtSSU until the late stages of assembly.

Its subcellular location is the mitochondrion. The catalysed reaction is adenosine(N)/adenosine(N+1) in rRNA + 4 S-adenosyl-L-methionine = N(6)-dimethyladenosine(N)/N(6)-dimethyladenosine(N+1) in rRNA + 4 S-adenosyl-L-homocysteine + 4 H(+). Mitochondrial methyltransferase which uses S-adenosyl methionine to dimethylate two highly conserved adjacent adenosine residues (A1583 and A1584) within the loop of helix 45 at the 3-prime end of 12S rRNA, thereby regulating the assembly or stability of the small subunit of the mitochondrial ribosome. Also required for basal transcription of mitochondrial DNA, probably via its interaction with POLRMT and TFAM. Stimulates transcription independently of the methyltransferase activity. The protein is Dimethyladenosine transferase 1, mitochondrial (TFB1M) of Macaca fascicularis (Crab-eating macaque).